The chain runs to 807 residues: Carbamoyltransferase HypF2 (807 aa).

Residues 14–101 enclose the Acylphosphatase-like domain; the sequence is RIRIRVRGVV…VDADGFAILE (88 aa). 2 C4-type zinc fingers span residues 120 to 145 and 170 to 195; these read CPDC…CTQC and CRPC…CPDC. The YrdC-like domain occupies 212–415; the sequence is VDPIAETVAR…HVQFIRRARG (204 aa). The segment at 663–682 is disordered; sequence WGEQPSPGRPKTVAHSLGGV.

It belongs to the carbamoyltransferase HypF family.

It carries out the reaction C-terminal L-cysteinyl-[HypE protein] + carbamoyl phosphate + ATP + H2O = C-terminal S-carboxamide-L-cysteinyl-[HypE protein] + AMP + phosphate + diphosphate + H(+). Its pathway is protein modification; [NiFe] hydrogenase maturation. In terms of biological role, involved in the maturation of [NiFe] hydrogenases. Along with HypE, it catalyzes the synthesis of the CN ligands of the active site iron of [NiFe]-hydrogenases. HypF functions as a carbamoyl transferase using carbamoylphosphate as a substrate and transferring the carboxamido moiety in an ATP-dependent reaction to the thiolate of the C-terminal cysteine of HypE yielding a protein-S-carboxamide. The sequence is that of Carbamoyltransferase HypF2 (hypF2) from Cupriavidus necator (strain ATCC 17699 / DSM 428 / KCTC 22496 / NCIMB 10442 / H16 / Stanier 337) (Ralstonia eutropha).